The chain runs to 365 residues: Flagellar P-ring protein (365 aa).

The signal sequence occupies residues 1–22 (MSVRRFLVWILALTVGAAPVMA).

Belongs to the FlgI family. In terms of assembly, the basal body constitutes a major portion of the flagellar organelle and consists of four rings (L,P,S, and M) mounted on a central rod.

Its subcellular location is the periplasm. The protein resides in the bacterial flagellum basal body. Its function is as follows. Assembles around the rod to form the L-ring and probably protects the motor/basal body from shearing forces during rotation. The chain is Flagellar P-ring protein from Marinobacter nauticus (strain ATCC 700491 / DSM 11845 / VT8) (Marinobacter aquaeolei).